A 400-amino-acid chain; its full sequence is MGKDIKKVVLAYSGGLDTSVILKWLVETYQCEVVAFSADIGQGEELEPVRGKAEASGACAVYIDDLREEFVKDYVFPAFRANAIYEGQYLLGTSLARPLISKRQMEIAKLEGADAVSHGATGKGNDQVRFELSYLAIDPAIKIIAPWREWDLNSRTKLMAYAEKHGIPVPTTQAKPYSSDRNLLHISFEGGVLEDPWAPPEEDMFVMSVSPQQAPDQPEEVLIQFEQGNPVAVNGEKLSPANLLAKLNELGGKHGVGRMDIVENRFVGMKSRGVYETPGGTILRIAHMNMETLTMDREVAHLRDSLIPKYAELVYNGFWFSPEMKLLQTTIDATQENVCGEVLLELYKGNCRVLGRRSDKSLYRMDFATFEEDEVYRQKDAEGFIRLNSLRLRIQSMMNK.

ATP contacts are provided by residues 11-19 and alanine 38; that span reads AYSGGLDTS. L-citrulline is bound by residues tyrosine 89 and serine 94. Glycine 119 contributes to the ATP binding site. Residues threonine 121, asparagine 125, and aspartate 126 each contribute to the L-aspartate site. Asparagine 125 contributes to the L-citrulline binding site. L-citrulline is bound by residues arginine 129, serine 178, serine 187, glutamate 263, and tyrosine 275.

Belongs to the argininosuccinate synthase family. Type 1 subfamily. In terms of assembly, homotetramer.

It localises to the cytoplasm. The catalysed reaction is L-citrulline + L-aspartate + ATP = 2-(N(omega)-L-arginino)succinate + AMP + diphosphate + H(+). It participates in amino-acid biosynthesis; L-arginine biosynthesis; L-arginine from L-ornithine and carbamoyl phosphate: step 2/3. This chain is Argininosuccinate synthase, found in Desulfatibacillum aliphaticivorans.